The primary structure comprises 297 residues: 5'-3' exonuclease (297 aa).

The 92-residue stretch at 171 to 262 (EPDQIVDFKA…MKLEKELFAI (92 aa)) folds into the 5'-3' exonuclease domain.

5'-3' exonuclease acting preferentially on double-stranded DNA. The polypeptide is 5'-3' exonuclease (polA) (Mycoplasmopsis pulmonis (strain UAB CTIP) (Mycoplasma pulmonis)).